The sequence spans 231 residues: NDR1/HIN1-like protein 3 (231 aa).

A helical transmembrane segment spans residues 47–67 (VIFNILITIAVLLGIAALIIW). N102, N135, N145, and N215 each carry an N-linked (GlcNAc...) asparagine glycan.

May form oligomers or be a component of larger protein complex in plasma membranes. In terms of processing, glycosylated. As to expression, expressed in roots, young and senescing leaves, cauline leaves, stems and siliques.

The protein resides in the cell membrane. In terms of biological role, confers resistance to Pseudomonas syringae pv. tomato DC3000 (Pst DC3000). The sequence is that of NDR1/HIN1-like protein 3 from Arabidopsis thaliana (Mouse-ear cress).